The chain runs to 197 residues: Large ribosomal subunit protein uL22 (197 aa).

The segment at 118-197 is disordered; sequence ESRPAKDQRS…ETSAAKGGSD (80 aa). A compositionally biased stretch (low complexity) spans 149-165; that stretch reads APAKKAAAKAPAKKAPA. Over residues 172-183 the composition is skewed to basic residues; it reads TPAKKAPAKKAP. A compositionally biased stretch (low complexity) spans 184–197; that stretch reads AKASETSAAKGGSD.

It belongs to the universal ribosomal protein uL22 family. In terms of assembly, part of the 50S ribosomal subunit.

This protein binds specifically to 23S rRNA; its binding is stimulated by other ribosomal proteins, e.g. L4, L17, and L20. It is important during the early stages of 50S assembly. It makes multiple contacts with different domains of the 23S rRNA in the assembled 50S subunit and ribosome. In terms of biological role, the globular domain of the protein is located near the polypeptide exit tunnel on the outside of the subunit, while an extended beta-hairpin is found that lines the wall of the exit tunnel in the center of the 70S ribosome. This is Large ribosomal subunit protein uL22 from Mycobacterium bovis (strain ATCC BAA-935 / AF2122/97).